Here is a 203-residue protein sequence, read N- to C-terminus: Putative 3-methyladenine DNA glycosylase (203 aa).

Belongs to the DNA glycosylase MPG family.

The sequence is that of Putative 3-methyladenine DNA glycosylase from Mycobacterium tuberculosis (strain ATCC 25177 / H37Ra).